A 175-amino-acid polypeptide reads, in one-letter code: NADH-ubiquinone oxidoreductase chain 6 (175 aa).

5 consecutive transmembrane segments (helical) span residues 1–21, 25–45, 47–67, 88–108, and 149–169; these read MMTYIVFILSTVFVVSFVSFS, SPIYGGFGLIVAGGTGCGIVL, FGGSFLGLMVFLIYLGGMLVV, AVLAMFITGVLAELLTACYIL, and YGTWLVVVTGWSLLIGVLVIM.

Belongs to the complex I subunit 6 family. Core subunit of respiratory chain NADH dehydrogenase (Complex I) which is composed of 45 different subunits.

It is found in the mitochondrion inner membrane. It catalyses the reaction a ubiquinone + NADH + 5 H(+)(in) = a ubiquinol + NAD(+) + 4 H(+)(out). Its function is as follows. Core subunit of the mitochondrial membrane respiratory chain NADH dehydrogenase (Complex I) which catalyzes electron transfer from NADH through the respiratory chain, using ubiquinone as an electron acceptor. Essential for the catalytic activity and assembly of complex I. This chain is NADH-ubiquinone oxidoreductase chain 6 (MT-ND6), found in Felis catus (Cat).